The sequence spans 248 residues: Pyridoxine 5'-phosphate synthase (248 aa).

A 3-amino-2-oxopropyl phosphate-binding site is contributed by Asn-12. 14 to 15 is a 1-deoxy-D-xylulose 5-phosphate binding site; the sequence is DH. Arg-23 contributes to the 3-amino-2-oxopropyl phosphate binding site. His-48 functions as the Proton acceptor in the catalytic mechanism. Positions 50 and 55 each coordinate 1-deoxy-D-xylulose 5-phosphate. Glu-75 (proton acceptor) is an active-site residue. A 1-deoxy-D-xylulose 5-phosphate-binding site is contributed by Thr-105. His-196 (proton donor) is an active-site residue. 3-amino-2-oxopropyl phosphate contacts are provided by residues Gly-197 and 218–219; that span reads GH.

Belongs to the PNP synthase family. In terms of assembly, homooctamer; tetramer of dimers.

It localises to the cytoplasm. It carries out the reaction 3-amino-2-oxopropyl phosphate + 1-deoxy-D-xylulose 5-phosphate = pyridoxine 5'-phosphate + phosphate + 2 H2O + H(+). It participates in cofactor biosynthesis; pyridoxine 5'-phosphate biosynthesis; pyridoxine 5'-phosphate from D-erythrose 4-phosphate: step 5/5. In terms of biological role, catalyzes the complicated ring closure reaction between the two acyclic compounds 1-deoxy-D-xylulose-5-phosphate (DXP) and 3-amino-2-oxopropyl phosphate (1-amino-acetone-3-phosphate or AAP) to form pyridoxine 5'-phosphate (PNP) and inorganic phosphate. The protein is Pyridoxine 5'-phosphate synthase of Ectopseudomonas mendocina (strain ymp) (Pseudomonas mendocina).